Here is a 107-residue protein sequence, read N- to C-terminus: Replication initiation control protein YabA (107 aa).

Zn(2+) is bound by residues His-81, Cys-83, Cys-97, and Cys-100.

This sequence belongs to the YabA family. Homotetramer. Interacts with both DnaA and DnaN, acting as a bridge between these two proteins. The cofactor is Zn(2+).

The protein resides in the cytoplasm. It is found in the nucleoid. Its function is as follows. Involved in control of chromosome replication initiation. Inhibits the cooperative binding of DnaA to the oriC region, thus negatively regulating initiation of chromosome replication. Inhibits the ability of DnaA-ATP to form a helix on DNA; does not disassemble preformed DnaA-DNA helices. Decreases the residence time of DnaA on the chromosome at its binding sites (oriC, replication forks and promoter-binding sites). Tethers DnaA to the replication machinery via the DNA polymerase beta sliding clamp subunit (dnaN). Associates with oriC and other DnaA targets on the chromosome in a DnaA-dependent manner. The chain is Replication initiation control protein YabA from Streptococcus equi subsp. equi (strain 4047).